Here is a 152-residue protein sequence, read N- to C-terminus: UPF0225 protein Ent638_2310 (152 aa).

Belongs to the UPF0225 family.

The polypeptide is UPF0225 protein Ent638_2310 (Enterobacter sp. (strain 638)).